The chain runs to 305 residues: Methionyl-tRNA formyltransferase (305 aa).

A (6S)-5,6,7,8-tetrahydrofolate-binding site is contributed by 111-114 (SLLP).

The protein belongs to the Fmt family.

The enzyme catalyses L-methionyl-tRNA(fMet) + (6R)-10-formyltetrahydrofolate = N-formyl-L-methionyl-tRNA(fMet) + (6S)-5,6,7,8-tetrahydrofolate + H(+). In terms of biological role, attaches a formyl group to the free amino group of methionyl-tRNA(fMet). The formyl group appears to play a dual role in the initiator identity of N-formylmethionyl-tRNA by promoting its recognition by IF2 and preventing the misappropriation of this tRNA by the elongation apparatus. The protein is Methionyl-tRNA formyltransferase of Campylobacter jejuni subsp. jejuni serotype O:23/36 (strain 81-176).